Here is a 200-residue protein sequence, read N- to C-terminus: NADH-quinone oxidoreductase subunit B 2 (200 aa).

[4Fe-4S] cluster contacts are provided by Cys79, Cys80, Cys144, and Cys174.

The protein belongs to the complex I 20 kDa subunit family. NDH-1 is composed of 14 different subunits. Subunits NuoB, C, D, E, F, and G constitute the peripheral sector of the complex. Requires [4Fe-4S] cluster as cofactor.

The protein localises to the cell inner membrane. It carries out the reaction a quinone + NADH + 5 H(+)(in) = a quinol + NAD(+) + 4 H(+)(out). Functionally, NDH-1 shuttles electrons from NADH, via FMN and iron-sulfur (Fe-S) centers, to quinones in the respiratory chain. The immediate electron acceptor for the enzyme in this species is believed to be ubiquinone. Couples the redox reaction to proton translocation (for every two electrons transferred, four hydrogen ions are translocated across the cytoplasmic membrane), and thus conserves the redox energy in a proton gradient. This chain is NADH-quinone oxidoreductase subunit B 2, found in Rhodopseudomonas palustris (strain BisA53).